We begin with the raw amino-acid sequence, 668 residues long: SHC SH2 domain-binding protein 1 (668 aa).

At alanine 2 the chain carries N-acetylalanine. A phosphoserine mark is found at serine 31, serine 44, and serine 273. 5 PbH1 repeats span residues 428-451 (GMDVKISGIKFIQHDSVEGILIIH), 452-473 (HGKTTLENCVLQCETTGVTVRT), 474-496 (SAELFMKNSDVYGAKGAGIEIYP), 497-518 (GSKCTLTDNGIHHCKEGILIKD), and 526-548 (IPKISMINNVIHNNEGYGVVLVK). Residue serine 630 is modified to Phosphoserine.

As to quaternary structure, interacts directly with isoform p52shc of SHC1 via its SH2 domain. Interacts with TRIM71; leading to enhanced SHCBP1 protein stability. Interacts with both members of the centralspindlin complex, KIF23 and RACGAP1. Expressed in spleen, lung and heart with higher expression in testis. No expression in brain, liver and skeletal muscle. Elevated expression in actively cycling cells.

Its subcellular location is the midbody. It localises to the cytoplasm. The protein localises to the cytoskeleton. The protein resides in the spindle. Functionally, may play a role in signaling pathways governing cellular proliferation, cell growth and differentiation. May be a component of a novel signaling pathway downstream of Shc. Acts as a positive regulator of FGF signaling in neural progenitor cells. In Mus musculus (Mouse), this protein is SHC SH2 domain-binding protein 1 (Shcbp1).